The sequence spans 765 residues: E3 ubiquitin-protein ligase SMURF2 (765 aa).

The 117-residue stretch at methionine 1–leucine 117 folds into the C2 domain. 3 WW domains span residues asparagine 157–arginine 190, proline 251–valine 284, and glycine 297–leucine 330. Residues serine 341–glutamate 375 form a disordered region. Residues alanine 351–serine 369 show a composition bias toward polar residues. The 335-residue stretch at arginine 431–glutamate 765 folds into the HECT domain. Cysteine 733 serves as the catalytic Glycyl thioester intermediate.

The protein localises to the nucleus. It localises to the cytoplasm. It is found in the cell membrane. The protein resides in the membrane raft. It catalyses the reaction S-ubiquitinyl-[E2 ubiquitin-conjugating enzyme]-L-cysteine + [acceptor protein]-L-lysine = [E2 ubiquitin-conjugating enzyme]-L-cysteine + N(6)-ubiquitinyl-[acceptor protein]-L-lysine.. It participates in protein modification; protein ubiquitination. Its function is as follows. E3 ubiquitin-protein ligase which accepts ubiquitin from an E2 ubiquitin-conjugating enzyme in the form of a thioester and then directly transfers the ubiquitin to targeted substrates. The chain is E3 ubiquitin-protein ligase SMURF2 (smurf2) from Danio rerio (Zebrafish).